A 388-amino-acid polypeptide reads, in one-letter code: Coproporphyrin III ferrochelatase (388 aa).

Fe-coproporphyrin III contacts are provided by Ser59 and Tyr124. Residues His186 and Glu276 each coordinate Fe(2+). The segment at 349–369 is disordered; that stretch reads QSPQHASRAVTDAAATGRRGD.

The protein belongs to the ferrochelatase family.

Its subcellular location is the cytoplasm. The catalysed reaction is Fe-coproporphyrin III + 2 H(+) = coproporphyrin III + Fe(2+). It functions in the pathway porphyrin-containing compound metabolism; protoheme biosynthesis. In terms of biological role, involved in coproporphyrin-dependent heme b biosynthesis. Catalyzes the insertion of ferrous iron into coproporphyrin III to form Fe-coproporphyrin III. The polypeptide is Coproporphyrin III ferrochelatase (Frankia alni (strain DSM 45986 / CECT 9034 / ACN14a)).